The primary structure comprises 147 residues: Signal peptidase complex subunit 3 (147 aa).

Residues 1–6 (MHSWVQ) are Cytoplasmic-facing. The chain crosses the membrane as a helical; Signal-anchor for type II membrane protein span at residues 7–29 (RLLTTATTAALLLLAACCAASAL). The Lumenal segment spans residues 30-147 (DAFHVPSVQA…EFNLPDSYTS (118 aa)).

This sequence belongs to the SPCS3 family. Component of the signal peptidase complex (SPC) composed of a catalytic subunit SEC11 and three accessory subunits SPCS1, SPCS2 and SPCS3. The complex induces a local thinning of the ER membrane which is used to measure the length of the signal peptide (SP) h-region of protein substrates. This ensures the selectivity of the complex towards h-regions shorter than 18-20 amino acids.

It is found in the endoplasmic reticulum membrane. Functionally, essential component of the signal peptidase complex (SPC) which catalyzes the cleavage of N-terminal signal sequences from nascent proteins as they are translocated into the lumen of the endoplasmic reticulum. Essential for the SPC catalytic activity, possibly by stabilizing and positioning the active center of the complex close to the lumenal surface. This Oryza sativa subsp. japonica (Rice) protein is Signal peptidase complex subunit 3.